The primary structure comprises 810 residues: Plasminogen (810 aa).

The N-terminal stretch at 1–19 (MQRKELVLLFLLFLQPGHG) is a signal peptide. A PAN domain is found at 20 to 98 (IPLDDYVTTQ…RDVILFEKKM (79 aa)). Intrachain disulfides connect Cys49-Cys73, Cys53-Cys61, Cys103-Cys181, Cys124-Cys164, Cys152-Cys176, Cys185-Cys262, Cys188-Cys316, Cys206-Cys245, Cys234-Cys257, Cys275-Cys352, Cys296-Cys335, Cys324-Cys347, Cys379-Cys456, Cys400-Cys439, Cys428-Cys451, Cys482-Cys561, Cys503-Cys544, Cys532-Cys556, Cys569-Cys685, Cys579-Cys586, Cys607-Cys623, Cys699-Cys766, Cys729-Cys745, and Cys756-Cys784. Kringle domains are found at residues 103–181 (CKVG…IIQC), 185–262 (CMHC…IPRC), 275–352 (CLMG…IPDC), 379–456 (CYQG…LKKC), and 482–561 (CIID…IPHC). Residue Asn339 is glycosylated (N-linked (GlcNAc...) asparagine). The interval 398 to 418 (KKCQPWTSMRPHRHSKTPENY) is disordered. The Peptidase S1 domain maps to 582–808 (RVGGCVAHPH…YVSWLQDVMR (227 aa)). Ser598 carries the phosphoserine modification. Active-site charge relay system residues include His622 and Asp665. Catalysis depends on Ser760, which acts as the Charge relay system.

The protein belongs to the peptidase S1 family. Plasminogen subfamily. In terms of assembly, interacts with CSPG4 and AMOT. Interacts (via the Kringle domains) with HRG; the interaction tethers PLG to the cell surface and enhances its activation. Interacts (via Kringle 4 domain) with ADA; the interaction stimulates PLG activation when in complex with DPP4. Angiostatin: Interacts with ATP5F1A; the interaction inhibits most of the angiogenic effects of angiostatin. In terms of processing, in the presence of the inhibitor, the activation involves only cleavage after Arg-582, yielding two chains held together by two disulfide bonds. In the absence of the inhibitor, the activation involves additionally the removal of the activation peptide.

It localises to the secreted. It carries out the reaction Preferential cleavage: Lys-|-Xaa &gt; Arg-|-Xaa, higher selectivity than trypsin. Converts fibrin into soluble products.. Its activity is regulated as follows. Converted into plasmin by plasminogen activators, both plasminogen and its activator being bound to fibrin. Cannot be activated with streptokinase. Plasmin dissolves the fibrin of blood clots and acts as a proteolytic factor in a variety of other processes including embryonic development, tissue remodeling, tumor invasion, and inflammation. In ovulation, weakens the walls of the Graafian follicle. It activates the urokinase-type plasminogen activator, collagenases and several complement zymogens, such as C1, C4 and C5. Cleavage of fibronectin and laminin leads to cell detachment and apoptosis. Also cleaves fibrin, thrombospondin and von Willebrand factor. Its role in tissue remodeling and tumor invasion may be modulated by CSPG4. Binds to cells. The sequence is that of Plasminogen (PLG) from Erinaceus europaeus (Western European hedgehog).